The primary structure comprises 58 residues: UPF0391 membrane protein Plav_0056 (58 aa).

2 consecutive transmembrane segments (helical) span residues 4–24 (WAAV…GGLV) and 30–50 (IAQI…IFGV).

Belongs to the UPF0391 family.

Its subcellular location is the cell membrane. The sequence is that of UPF0391 membrane protein Plav_0056 from Parvibaculum lavamentivorans (strain DS-1 / DSM 13023 / NCIMB 13966).